A 385-amino-acid chain; its full sequence is S-adenosylmethionine synthase (385 aa).

His-16 provides a ligand contact to ATP. Asp-18 is a binding site for Mg(2+). Residue Glu-44 coordinates K(+). L-methionine contacts are provided by Glu-57 and Gln-100. Positions 100 to 110 (QSPDINQGVDR) are flexible loop. ATP is bound by residues 164–166 (DGK), 230–231 (KF), Asp-239, 245–246 (RK), Ala-262, and Lys-266. Asp-239 contacts L-methionine. Position 270 (Lys-270) interacts with L-methionine.

Belongs to the AdoMet synthase family. Homotetramer; dimer of dimers. The cofactor is Mg(2+). K(+) serves as cofactor.

The protein resides in the cytoplasm. The catalysed reaction is L-methionine + ATP + H2O = S-adenosyl-L-methionine + phosphate + diphosphate. It participates in amino-acid biosynthesis; S-adenosyl-L-methionine biosynthesis; S-adenosyl-L-methionine from L-methionine: step 1/1. In terms of biological role, catalyzes the formation of S-adenosylmethionine (AdoMet) from methionine and ATP. The overall synthetic reaction is composed of two sequential steps, AdoMet formation and the subsequent tripolyphosphate hydrolysis which occurs prior to release of AdoMet from the enzyme. In Helicobacter pylori (strain HPAG1), this protein is S-adenosylmethionine synthase.